The following is a 214-amino-acid chain: UPF0502 protein Acid345_3645 (214 aa).

The protein belongs to the UPF0502 family.

The polypeptide is UPF0502 protein Acid345_3645 (Koribacter versatilis (strain Ellin345)).